The following is a 579-amino-acid chain: Laccase (579 aa).

The tat-type signal signal peptide spans 1-31 (MTDWSRRRFLQTGAALGIAGTLPQTTTEVSA). Residues 82-214 (WGFDGSYPGP…AGLLGLYSIT (133 aa)) form the Plastocyanin-like 1 domain. Residues His145, His147, His192, and His194 each coordinate Cu cation. Residues 372 to 401 (VSDPSTPPEDASADPTSLSLPTPASYDESD) form a disordered region. Residues 423–530 (LNGHVFGDED…NKMMIPFVVE (108 aa)) enclose the Plastocyanin-like 2 domain. N-linked (GlcNAc...) asparagine glycosylation is present at Asn449. Cu cation contacts are provided by His455, His458, His460, His512, Cys513, His514, His518, and Met523. N-linked (GlcNAc...) asparagine glycosylation occurs at Asn557.

Belongs to the multicopper oxidase family. It depends on Cu(2+) as a cofactor. Post-translationally, exported by the Tat system. In terms of processing, glycosylated.

Its subcellular location is the secreted. The enzyme catalyses 4 hydroquinone + O2 = 4 benzosemiquinone + 2 H2O. With respect to regulation, inhibited by 1 mM NaN(3), 10 mM thiourea, 10 mM 1,10-phenanthroline, 0.1 mM DL-dithiothreitol (DTT) and 1 mM L-cysteine. The inhibition by DTT and L-cysteine is likely caused by reduction of the oxidized substrate and not by inhibition of the enzyme. Its function is as follows. Catalyzes the oxidation of a wide variety of organic substrates, including bilirubin, syringaldazine (SGZ), 2,2'-azino-di-(3-ethylbenzothiazoline)-6-sulfonic acid (ABTS) and dimethoxyphenol (DMP). No oxidation of Fe(2+) or guaiacol. The polypeptide is Laccase (lccA) (Haloferax volcanii (strain ATCC 29605 / DSM 3757 / JCM 8879 / NBRC 14742 / NCIMB 2012 / VKM B-1768 / DS2) (Halobacterium volcanii)).